We begin with the raw amino-acid sequence, 69 residues long: Double-strand break reduction protein (69 aa).

Its function is as follows. Helps to maintain the integrity of the chromosome by lowering the steady-state level of double strand breaks. This region of DNA acts as an antitoxin to toxin RalR, a DNase, but it seems to be sRNA RalA that has the antitoxin activity and not this putative protein. Therefore the identity of this as a protein-coding gene has been cast into doubt. In Escherichia coli (strain K12), this protein is Double-strand break reduction protein.